The chain runs to 584 residues: AAA ATPase forming ring-shaped complexes (584 aa).

A coiled-coil region spans residues 10–96 (AQSGTEHAEQ…LKENLDAVTH (87 aa)). Residues 40–66 (HQLQSAQRHAAGLSERRRAAEAQTQTA) are disordered. ATP is bound at residue 292–297 (GTGKTM).

The protein belongs to the AAA ATPase family. As to quaternary structure, homohexamer. Assembles into a hexameric ring structure.

The polypeptide is AAA ATPase forming ring-shaped complexes (Micrococcus luteus (strain ATCC 4698 / DSM 20030 / JCM 1464 / CCM 169 / CCUG 5858 / IAM 1056 / NBRC 3333 / NCIMB 9278 / NCTC 2665 / VKM Ac-2230) (Micrococcus lysodeikticus)).